We begin with the raw amino-acid sequence, 156 residues long: Small ribosomal subunit protein uS7 (156 aa).

The protein belongs to the universal ribosomal protein uS7 family. Part of the 30S ribosomal subunit. Contacts proteins S9 and S11.

One of the primary rRNA binding proteins, it binds directly to 16S rRNA where it nucleates assembly of the head domain of the 30S subunit. Is located at the subunit interface close to the decoding center, probably blocks exit of the E-site tRNA. The sequence is that of Small ribosomal subunit protein uS7 from Geobacter metallireducens (strain ATCC 53774 / DSM 7210 / GS-15).